The primary structure comprises 28 residues: Cyclotide vodo I3 (28 aa).

3 disulfide bridges follow: C4-C18, C8-C20, and C13-C25.

This is a cyclic peptide. Post-translationally, contains 3 disulfide bonds.

Its function is as follows. Probably participates in a plant defense mechanism. The polypeptide is Cyclotide vodo I3 (Viola odorata (Sweet violet)).